A 335-amino-acid polypeptide reads, in one-letter code: UPF0284 protein TK0853 (335 aa).

The protein belongs to the UPF0284 family.

This Thermococcus kodakarensis (strain ATCC BAA-918 / JCM 12380 / KOD1) (Pyrococcus kodakaraensis (strain KOD1)) protein is UPF0284 protein TK0853.